Consider the following 599-residue polypeptide: Elongation factor 4 (599 aa).

One can recognise a tr-type G domain in the interval 2–184 (KHIRNFSIIA…RLVRDIPPPE (183 aa)). GTP-binding positions include 14–19 (DHGKST) and 131–134 (NKID).

Belongs to the TRAFAC class translation factor GTPase superfamily. Classic translation factor GTPase family. LepA subfamily.

The protein localises to the cell inner membrane. The enzyme catalyses GTP + H2O = GDP + phosphate + H(+). Required for accurate and efficient protein synthesis under certain stress conditions. May act as a fidelity factor of the translation reaction, by catalyzing a one-codon backward translocation of tRNAs on improperly translocated ribosomes. Back-translocation proceeds from a post-translocation (POST) complex to a pre-translocation (PRE) complex, thus giving elongation factor G a second chance to translocate the tRNAs correctly. Binds to ribosomes in a GTP-dependent manner. The sequence is that of Elongation factor 4 from Erwinia tasmaniensis (strain DSM 17950 / CFBP 7177 / CIP 109463 / NCPPB 4357 / Et1/99).